A 591-amino-acid polypeptide reads, in one-letter code: Laccase (591 aa).

The N-terminal stretch at 1-20 (MPSFFRALFSGLIASQLSWA) is a signal peptide. Plastocyanin-like domains lie at 66–189 (VRQY…IQID) and 198–356 (IDLG…HPTN). N-linked (GlcNAc...) asparagine glycosylation is present at N121. Cu cation contacts are provided by H126, H128, H171, and H173. 2 cysteine pairs are disulfide-bonded: C147–C571 and C332–C366. N-linked (GlcNAc...) asparagine glycosylation is found at N234, N242, N265, and N323. 2 N-linked (GlcNAc...) asparagine glycosylation sites follow: N407 and N425. The Plastocyanin-like 3 domain maps to 416 to 551 (GHPITQYVIN…AGLGNTFLEQ (136 aa)). Cu cation contacts are provided by H463, H466, H468, H533, C534, H535, and H539.

This sequence belongs to the multicopper oxidase family. It depends on Cu cation as a cofactor.

It localises to the secreted. The enzyme catalyses 4 hydroquinone + O2 = 4 benzosemiquinone + 2 H2O. Lignin degradation and detoxification of lignin-derived products. This Cryphonectria parasitica (Chestnut blight fungus) protein is Laccase (LAC-1).